The chain runs to 483 residues: S-adenosylhomocysteine hydrolase-like protein 1 (483 aa).

Residues 1-56 (MQEFTKFPTKTGRRSLSRSISQSSTDSYSSAASYTDSSDDEVSPREKQQTNSKGSS) are disordered. The segment covering 17 to 36 (SRSISQSSTDSYSSAASYTD) has biased composition (low complexity). The PEST stretch occupies residues 18–45 (RSISQSSTDSYSSAASYTDSSDDEVSPR). Serine 21 is modified (phosphoserine; by PKD). Residues serine 24, serine 27, serine 30, and serine 37 each carry the phosphoserine modification. Residues 91–154 (QGEKPLAGAK…EAGVAVFAWK (64 aa)) form an interaction with BCL2L10 region. Substrate is bound by residues threonine 108, aspartate 182, glutamate 207, lysine 237, and aspartate 241. An NAD binding region spans residues 234 to 401 (SVTKQKFDNL…EGRLLNLSCS (168 aa)). NAD(+)-binding positions include 271 to 275 (GYGEV), glutamate 294, and asparagine 329. Residue serine 344 is modified to Phosphoserine. 350-352 (MGH) is a binding site for NAD(+). A PDZ-binding region spans residues 473–483 (NGPFKPNYYRY).

It belongs to the adenosylhomocysteinase family. As to quaternary structure, forms multimers. Forms heteromultimers with AHCYL2 (via the C-terminal region). Interacts (when phosphorylated) with ITPR1 (when not phosphorylated); the interaction suppresses inositol 1,4,5-trisphosphate binding to ITPR1. Interacts with BCL2L10; this strengthens the interaction of AHCYL1 with ITPR1. Interacts with CFTR and SLC26A6; the interactions take place once AHCYL1 is released from ITPR1 and increase CFTR and SLC26A6 activities. Interacts with RRM1; in a phosphorylation- and (dATP)-dependent manner. Interacts (via PEST domain when phosphorylated) with SLC4A4 isoform 1 but not isoform 2; the interaction increases SLC4A4 isoform 1 activity. Interacts (when phosphorylated) with SLC9A3; the interaction is required for SLC9A3 apical location and activity. Interacts (when phosphorylated) with FIP1L1; the interaction is direct and associates AHCYL1 with the CPSF complex and RNA. Interacts with PAPOLA. Interacts with ZCCHC4. Interacts with AHCY. Requires NAD(+) as cofactor. In terms of processing, phosphorylated at Ser/Thr residues between Ser-21 and Thr-25 in the PEST region: required for interaction with dATP-bound RRM1 and ITPR1. Phosphorylation at Ser-21 by PRKD1 and CAMK4 is required for further phosphorylations by CSNK1A1. Phosphorylation is induced by oxidative stress. Probably phosphorylated by CAMK2A; phosphorylation at Ser-21 may be required for interaction with SLC9A3. Dephosphorylated in response to apoptotic stress conditions which causes translocation of both AHCYL1 and BCL2L10 from mitochondria-associated endoplasmic reticulum membranes and promotes apoptosis. In terms of tissue distribution, expressed in kidney proximal tubules and outer medulla (at protein level).

The protein resides in the endoplasmic reticulum. It localises to the cytoplasm. It is found in the cytosol. The protein localises to the apical cell membrane. Its subcellular location is the microsome. Its function is as follows. Multifaceted cellular regulator which coordinates several essential cellular functions including regulation of epithelial HCO3(-) and fluid secretion, mRNA processing and DNA replication. Regulates ITPR1 sensitivity to inositol 1,4,5-trisphosphate, competing for the common binding site and acting as endogenous 'pseudoligand' whose inhibitory activity can be modulated by its phosphorylation status. Promotes the formation of contact points between the endoplasmic reticulum (ER) and mitochondria, facilitating transfer of Ca(2+) from the ER to mitochondria. Under normal cellular conditions, functions cooperatively with BCL2L10 to limit ITPR1-mediated Ca(2+) release but, under apoptotic stress conditions, dephosphorylated which promotes dissociation of both AHCYL1 and BCL2L10 from mitochondria-associated endoplasmic reticulum membranes, inhibits BCL2L10 interaction with ITPR1 and leads to increased Ca(2+) transfer to mitochondria which promotes apoptosis. In the pancreatic and salivary ducts, at resting state, attenuates inositol 1,4,5-trisphosphate-induced calcium release by interacting with ITPR1. When extracellular stimuli induce ITPR1 phosphorylation or inositol 1,4,5-trisphosphate production, dissociates from ITPR1 to interact with CFTR and SLC26A6, mediating their synergistic activation by calcium and cAMP that stimulates the epithelial secretion of electrolytes and fluid. Also activates basolateral SLC4A4 isoform 1 to coordinate fluid and HCO3(-) secretion. Inhibits the effect of STK39 on SLC4A4 and CFTR by recruiting PP1 phosphatase which activates SLC4A4, SLC26A6 and CFTR through dephosphorylation. Mediates the induction of SLC9A3 surface expression produced by Angiotensin-2. Depending on the cell type, activates SLC9A3 in response to calcium or reverses SLC9A3R2-dependent calcium inhibition. May modulate the polyadenylation state of specific mRNAs, both by controlling the subcellular location of FIP1L1 and by inhibiting PAPOLA activity, in response to a stimulus that alters its phosphorylation state. Acts as a (dATP)-dependent inhibitor of ribonucleotide reductase large subunit RRM1, controlling the endogenous dNTP pool and ensuring normal cell cycle progression. In vitro does not exhibit any S-adenosyl-L-homocysteine hydrolase activity. The polypeptide is S-adenosylhomocysteine hydrolase-like protein 1 (Rattus norvegicus (Rat)).